The chain runs to 120 residues: Large ribosomal subunit protein bL19 (120 aa).

This sequence belongs to the bacterial ribosomal protein bL19 family.

Its function is as follows. This protein is located at the 30S-50S ribosomal subunit interface and may play a role in the structure and function of the aminoacyl-tRNA binding site. The sequence is that of Large ribosomal subunit protein bL19 from Acaryochloris marina (strain MBIC 11017).